The chain runs to 574 residues: Proline--tRNA ligase (574 aa).

It belongs to the class-II aminoacyl-tRNA synthetase family. ProS type 1 subfamily. In terms of assembly, homodimer.

The protein localises to the cytoplasm. The enzyme catalyses tRNA(Pro) + L-proline + ATP = L-prolyl-tRNA(Pro) + AMP + diphosphate. Functionally, catalyzes the attachment of proline to tRNA(Pro) in a two-step reaction: proline is first activated by ATP to form Pro-AMP and then transferred to the acceptor end of tRNA(Pro). As ProRS can inadvertently accommodate and process non-cognate amino acids such as alanine and cysteine, to avoid such errors it has two additional distinct editing activities against alanine. One activity is designated as 'pretransfer' editing and involves the tRNA(Pro)-independent hydrolysis of activated Ala-AMP. The other activity is designated 'posttransfer' editing and involves deacylation of mischarged Ala-tRNA(Pro). The misacylated Cys-tRNA(Pro) is not edited by ProRS. This chain is Proline--tRNA ligase, found in Nautilia profundicola (strain ATCC BAA-1463 / DSM 18972 / AmH).